Here is a 582-residue protein sequence, read N- to C-terminus: Multicopper oxidase LPR1 homolog 1 (582 aa).

The signal sequence occupies residues 1–20 (MRAKVELAVLLLVLVGVAAG). Histidine 150, histidine 152, histidine 198, and histidine 200 together coordinate Cu cation. N-linked (GlcNAc...) asparagine glycans are attached at residues asparagine 256, asparagine 300, and asparagine 308. The 70-residue stretch at 285 to 354 (PFLAVARRRY…DVVVDFSQST (70 aa)) folds into the Plastocyanin-like domain. Cu cation-binding residues include histidine 467, histidine 470, and histidine 472. N-linked (GlcNAc...) asparagine glycosylation occurs at asparagine 504. Cu cation contacts are provided by histidine 563, cysteine 564, histidine 565, histidine 569, and methionine 574.

It belongs to the multicopper oxidase family. Cu cation serves as cofactor. Highly expressed in roots, and at lower levels in basal stems and leaf blades.

The protein localises to the endoplasmic reticulum membrane. Its function is as follows. Multicopper oxidase that may play a role in the maintenance of inorganic phosphate homeostasis. This is Multicopper oxidase LPR1 homolog 1 from Oryza sativa subsp. japonica (Rice).